Here is a 277-residue protein sequence, read N- to C-terminus: Shikimate dehydrogenase (NADP(+)) (277 aa).

Shikimate is bound by residues 14 to 16 (SKS) and Thr61. The active-site Proton acceptor is Lys65. An NADP(+)-binding site is contributed by Asp77. Asn86 and Asp102 together coordinate shikimate. NADP(+) is bound by residues 127 to 131 (GAGGA), 151 to 156 (NRTPDK), and Met215. Tyr217 contributes to the shikimate binding site. Residue Gly239 participates in NADP(+) binding.

It belongs to the shikimate dehydrogenase family. Homodimer.

The enzyme catalyses shikimate + NADP(+) = 3-dehydroshikimate + NADPH + H(+). It functions in the pathway metabolic intermediate biosynthesis; chorismate biosynthesis; chorismate from D-erythrose 4-phosphate and phosphoenolpyruvate: step 4/7. In terms of biological role, involved in the biosynthesis of the chorismate, which leads to the biosynthesis of aromatic amino acids. Catalyzes the reversible NADPH linked reduction of 3-dehydroshikimate (DHSA) to yield shikimate (SA). The protein is Shikimate dehydrogenase (NADP(+)) of Nitrosomonas eutropha (strain DSM 101675 / C91 / Nm57).